The following is a 560-amino-acid chain: Proteasome-associated ATPase (560 aa).

Residues M1 to A19 show a composition bias toward basic and acidic residues. Residues M1 to Q21 form a disordered region. Residues R16–K55 are a coiled coil. G237 to L242 provides a ligand contact to ATP. The tract at residues Y559–L560 is docks into pockets in the proteasome alpha-ring.

It belongs to the AAA ATPase family. As to quaternary structure, homohexamer. Assembles into a hexameric ring structure that caps the 20S proteasome core. Strongly interacts with the prokaryotic ubiquitin-like protein Pup through a hydrophobic interface; the interacting region of ARC lies in its N-terminal coiled-coil domain. There is one Pup binding site per ARC hexamer ring. Upon ATP-binding, the C-terminus of ARC interacts with the alpha-rings of the proteasome core, possibly by binding to the intersubunit pockets.

Its pathway is protein degradation; proteasomal Pup-dependent pathway. Functionally, ATPase which is responsible for recognizing, binding, unfolding and translocation of pupylated proteins into the bacterial 20S proteasome core particle. May be essential for opening the gate of the 20S proteasome via an interaction with its C-terminus, thereby allowing substrate entry and access to the site of proteolysis. Thus, the C-termini of the proteasomal ATPase may function like a 'key in a lock' to induce gate opening and therefore regulate proteolysis. The chain is Proteasome-associated ATPase from Beutenbergia cavernae (strain ATCC BAA-8 / DSM 12333 / CCUG 43141 / JCM 11478 / NBRC 16432 / NCIMB 13614 / HKI 0122).